The chain runs to 377 residues: [2-(trimethylamino)ethyl]phosphonate dioxygenase (377 aa).

The segment at 95 to 119 is disordered; sequence DTDQSSEVGRTSPDVETWDSSQPAP. N187 serves as a coordination point for [2-(trimethylamino)ethyl]phosphonate. H198 lines the 2-oxoglutarate pocket. H198 and D200 together coordinate Fe(2+). [2-(trimethylamino)ethyl]phosphonate contacts are provided by D200, N201, Y203, N286, and R288. Residues H341, R343, and R352 each contribute to the 2-oxoglutarate site. H341 serves as a coordination point for Fe(2+).

Belongs to the gamma-BBH/TMLD family. In terms of assembly, homodimer. Fe(2+) serves as cofactor. L-ascorbate is required as a cofactor.

The enzyme catalyses [2-(trimethylamino)ethyl]phosphonate + 2-oxoglutarate + O2 = [(1R)-1-hydroxy-2-(trimethylamino)ethyl]phosphonate + succinate + CO2. In terms of biological role, involved in the degradation of the naturally occurring organophosphonate 2-(trimethylammonio)ethylphosphonate (TMAEP). Catalyzes the hydroxylation of TMAEP to (R)-1-hydroxy-2-(trimethylammonio)ethylphosphonate (OH-TMAEP). Is highly specific for its N-trimethylated substrate. Cannot use gamma-butyrobetaine as substrate. The polypeptide is [2-(trimethylamino)ethyl]phosphonate dioxygenase (Leisingera caerulea (Phaeobacter caeruleus)).